The following is a 696-amino-acid chain: Polyribonucleotide nucleotidyltransferase (696 aa).

Residues Asp-489 and Asp-495 each coordinate Mg(2+). The KH domain occupies 556-615 (PQYVTMKINPEKIRDVIGKGGVVIREITEATNCAIDISDDGTIKIAAHTTEEGEAAKRRI). The S1 motif domain maps to 625–693 (GKVYEGTVVK…RQGRVRLSMK (69 aa)).

This sequence belongs to the polyribonucleotide nucleotidyltransferase family. As to quaternary structure, component of the RNA degradosome, which is a multiprotein complex involved in RNA processing and mRNA degradation. Mg(2+) serves as cofactor.

The protein resides in the cytoplasm. It carries out the reaction RNA(n+1) + phosphate = RNA(n) + a ribonucleoside 5'-diphosphate. Its function is as follows. Involved in mRNA degradation. Catalyzes the phosphorolysis of single-stranded polyribonucleotides processively in the 3'- to 5'-direction. This is Polyribonucleotide nucleotidyltransferase from Coxiella burnetii (strain CbuK_Q154) (Coxiella burnetii (strain Q154)).